We begin with the raw amino-acid sequence, 240 residues long: UDP-2,3-diacylglucosamine hydrolase (240 aa).

The Mn(2+) site is built by Asp-9, His-11, Asp-43, Asn-81, and His-116. Residue Asn-81–Arg-82 coordinates substrate. Positions 124, 162, 166, 169, and 197 each coordinate substrate. Positions 197 and 199 each coordinate Mn(2+).

This sequence belongs to the LpxH family. Mn(2+) serves as cofactor.

It is found in the cell inner membrane. It catalyses the reaction UDP-2-N,3-O-bis[(3R)-3-hydroxytetradecanoyl]-alpha-D-glucosamine + H2O = 2-N,3-O-bis[(3R)-3-hydroxytetradecanoyl]-alpha-D-glucosaminyl 1-phosphate + UMP + 2 H(+). It participates in glycolipid biosynthesis; lipid IV(A) biosynthesis; lipid IV(A) from (3R)-3-hydroxytetradecanoyl-[acyl-carrier-protein] and UDP-N-acetyl-alpha-D-glucosamine: step 4/6. In terms of biological role, hydrolyzes the pyrophosphate bond of UDP-2,3-diacylglucosamine to yield 2,3-diacylglucosamine 1-phosphate (lipid X) and UMP by catalyzing the attack of water at the alpha-P atom. Involved in the biosynthesis of lipid A, a phosphorylated glycolipid that anchors the lipopolysaccharide to the outer membrane of the cell. This Neisseria meningitidis serogroup B (strain ATCC BAA-335 / MC58) protein is UDP-2,3-diacylglucosamine hydrolase.